The sequence spans 513 residues: Histidine ammonia-lyase (513 aa).

A cross-link (5-imidazolinone (Ala-Gly)) is located at residues 143–145; the sequence is ASG. At Ser144 the chain carries 2,3-didehydroalanine (Ser).

The protein belongs to the PAL/histidase family. In terms of processing, contains an active site 4-methylidene-imidazol-5-one (MIO), which is formed autocatalytically by cyclization and dehydration of residues Ala-Ser-Gly.

The protein localises to the cytoplasm. The enzyme catalyses L-histidine = trans-urocanate + NH4(+). It participates in amino-acid degradation; L-histidine degradation into L-glutamate; N-formimidoyl-L-glutamate from L-histidine: step 1/3. The sequence is that of Histidine ammonia-lyase from Paracoccus denitrificans (strain Pd 1222).